The primary structure comprises 498 residues: Galactose-1-phosphate uridylyltransferase (498 aa).

The protein belongs to the galactose-1-phosphate uridylyltransferase type 2 family.

The protein localises to the cytoplasm. The enzyme catalyses alpha-D-galactose 1-phosphate + UDP-alpha-D-glucose = alpha-D-glucose 1-phosphate + UDP-alpha-D-galactose. It functions in the pathway carbohydrate metabolism; galactose metabolism. This chain is Galactose-1-phosphate uridylyltransferase, found in Staphylococcus carnosus (strain TM300).